A 172-amino-acid chain; its full sequence is Large ribosomal subunit protein uL10 (172 aa).

It belongs to the universal ribosomal protein uL10 family. In terms of assembly, part of the ribosomal stalk of the 50S ribosomal subunit. The N-terminus interacts with L11 and the large rRNA to form the base of the stalk. The C-terminus forms an elongated spine to which L12 dimers bind in a sequential fashion forming a multimeric L10(L12)X complex.

Forms part of the ribosomal stalk, playing a central role in the interaction of the ribosome with GTP-bound translation factors. The chain is Large ribosomal subunit protein uL10 from Rhodopseudomonas palustris (strain BisB5).